A 788-amino-acid polypeptide reads, in one-letter code: Serine/threonine-protein kinase MARK2 (788 aa).

The tract at residues 1 to 46 (MSSARTPLPTLNERDTEQPTLGHLDSKPSSKSNMIRGRNSATSADE) is disordered. Over residues 27–45 (KPSSKSNMIRGRNSATSAD) the composition is skewed to polar residues. Phosphoserine is present on Ser-40. The region spanning 53 to 304 (YRLLKTIGKG…LEQIMKDRWM (252 aa)) is the Protein kinase domain. A Phosphothreonine; by autocatalysis modification is found at Thr-58. Residues 59-67 (IGKGNFAKV) and Lys-82 contribute to the ATP site. A phosphoserine; by CaMK1 mark is found at Ser-91, Ser-92, and Ser-93. Catalysis depends on Asp-175, which acts as the Proton acceptor. Thr-208 carries the phosphothreonine; by LKB1 and TAOK1 modification. Ser-212 carries the phosphoserine; by GSK3-beta modification. Position 274 is a phosphoserine; by autocatalysis (Ser-274). Thr-275 is subject to Phosphothreonine; by autocatalysis. Phosphothreonine; by CaMK1 is present on Thr-294. The region spanning 323-362 (YKDPRRTELMVSMGYTREEIQDSLVGQRYNEVMATYLLLG) is the UBA domain. The disordered stretch occupies residues 373–632 (ITLKPRPSAD…HSQGRRGASG (260 aa)). 2 positions are modified to phosphoserine: Lys-376 and Ser-409. Residues 418 to 432 (PTSNSYSKKTQSNNA) are compositionally biased toward polar residues. Basic and acidic residues predominate over residues 433–445 (ENKRPEEDRESGR). Ser-456 is subject to Phosphoserine. Phosphothreonine is present on Thr-467. Polar residues predominate over residues 467–486 (TPTPSTNSVLSTSTNRSRNS). Residues Ser-486 and Ser-493 each carry the phosphoserine modification. A compositionally biased stretch (polar residues) spans 495-504 (GQASIQNGKD). A compositionally biased stretch (low complexity) spans 511 to 525 (SRASTASASAAVSAA). Residues Ser-569, Ser-571, and Ser-592 each carry the phosphoserine modification. Residue Thr-596 is modified to Phosphothreonine; by PKC/PRKCZ. 2 positions are modified to phosphoserine: Ser-619 and Ser-722. The KA1 domain maps to 739–788 (TPGHEDFVQWEMEVCKLPRLSLNGVRFKRISGTSMAFKNIASKIANELKL).

Belongs to the protein kinase superfamily. CAMK Ser/Thr protein kinase family. SNF1 subfamily. In terms of assembly, homodimer. Interacts with PAK5; leading to inhibit the protein kinase activity. Interacts with MAPT/TAU. Interacts with MTCL1 isoform 1; the interaction is direct and increases MARK2 microtubule-binding ability. Interacts (when phosphorylated at Thr-596) with YWHAZ. Interacts with YWHAB, YWHAG and YWHAQ. As to quaternary structure, (Microbial infection) In case of infection, interacts with H.pylori CagA, leading to inhibit kinase activity and junctional and polarity defects. Mg(2+) is required as a cofactor. In terms of processing, autophosphorylated. Phosphorylated at Thr-208 by STK11/LKB1 in complex with STE20-related adapter-alpha (STRADA) pseudo kinase and CAB39. Phosphorylation at Thr-208 by TAOK1 activates the kinase activity, leading to phosphorylation and detachment of MAPT/TAU from microtubules. Phosphorylation at Ser-212 by GSK3-beta (GSK3B) inhibits the kinase activity. Phosphorylation by CaMK1 promotes activity and is required to promote neurite outgrowth. Phosphorylation at Thr-596 by PRKCZ/aPKC in polarized epithelial cells inhibits the kinase activity and promotes binding to 14-3-3 protein YWHAZ, leading to relocation from cell membrane to cytoplasm. As to expression, high levels of expression in heart, brain, skeletal muscle and pancreas, lower levels observed in lung, liver and kidney.

It localises to the cell membrane. The protein resides in the cytoplasm. The protein localises to the lateral cell membrane. It is found in the cytoskeleton. Its subcellular location is the cell projection. It localises to the dendrite. The catalysed reaction is L-seryl-[protein] + ATP = O-phospho-L-seryl-[protein] + ADP + H(+). The enzyme catalyses L-threonyl-[protein] + ATP = O-phospho-L-threonyl-[protein] + ADP + H(+). It catalyses the reaction L-seryl-[tau protein] + ATP = O-phospho-L-seryl-[tau protein] + ADP + H(+). It carries out the reaction L-threonyl-[tau protein] + ATP = O-phospho-L-threonyl-[tau protein] + ADP + H(+). With respect to regulation, inhibited by PAK5; inhibition is independent of the kinase activity of PAK5. Activated by phosphorylation on Thr-208. Inhibited by phosphorylation at Ser-212 and Thr-596. Inhibited by hymenialdisine. Specifically inhibited by the H.pylori CagA peptide FPLKRHDKVDDLSK that mimics host substrates and binds to the kinase substrate-binding site. Serine/threonine-protein kinase. Involved in cell polarity and microtubule dynamics regulation. Phosphorylates CRTC2/TORC2, DCX, HDAC7, KIF13B, MAP2, MAP4 and RAB11FIP2. Phosphorylates the microtubule-associated protein MAPT/TAU. Plays a key role in cell polarity by phosphorylating the microtubule-associated proteins MAP2, MAP4 and MAPT/TAU at KXGS motifs, causing detachment from microtubules, and their disassembly. Regulates epithelial cell polarity by phosphorylating RAB11FIP2. Involved in the regulation of neuronal migration through its dual activities in regulating cellular polarity and microtubule dynamics, possibly by phosphorylating and regulating DCX. Regulates axogenesis by phosphorylating KIF13B, promoting interaction between KIF13B and 14-3-3 and inhibiting microtubule-dependent accumulation of KIF13B. Also required for neurite outgrowth and establishment of neuronal polarity. Regulates localization and activity of some histone deacetylases by mediating phosphorylation of HDAC7, promoting subsequent interaction between HDAC7 and 14-3-3 and export from the nucleus. Also acts as a positive regulator of the Wnt signaling pathway, probably by mediating phosphorylation of dishevelled proteins (DVL1, DVL2 and/or DVL3). Modulates the developmental decision to build a columnar versus a hepatic epithelial cell apparently by promoting a switch from a direct to a transcytotic mode of apical protein delivery. Essential for the asymmetric development of membrane domains of polarized epithelial cells. The protein is Serine/threonine-protein kinase MARK2 of Homo sapiens (Human).